The sequence spans 601 residues: Glutamyl-tRNA(Gln) amidotransferase subunit B, mitochondrial (601 aa).

The N-terminal 52 residues, 1–52 (MLQQWLRQSPGAARFLRGSCCRGPQSGSLRHSPLPTAPHRCIRSLQTSATES), are a transit peptide targeting the mitochondrion.

The protein belongs to the GatB/GatE family. GatB subfamily. In terms of assembly, subunit of the heterotrimeric GatCAB amidotransferase (AdT) complex, composed of A, B and C subunits.

Its subcellular location is the mitochondrion. The enzyme catalyses L-glutamyl-tRNA(Gln) + L-glutamine + ATP + H2O = L-glutaminyl-tRNA(Gln) + L-glutamate + ADP + phosphate + H(+). In terms of biological role, allows the formation of correctly charged Gln-tRNA(Gln) through the transamidation of misacylated Glu-tRNA(Gln) in the mitochondria. The reaction takes place in the presence of glutamine and ATP through an activated gamma-phospho-Glu-tRNA(Gln). The chain is Glutamyl-tRNA(Gln) amidotransferase subunit B, mitochondrial from Neosartorya fischeri (strain ATCC 1020 / DSM 3700 / CBS 544.65 / FGSC A1164 / JCM 1740 / NRRL 181 / WB 181) (Aspergillus fischerianus).